The sequence spans 199 residues: dITP/XTP pyrophosphatase (199 aa).

7-12 (TSNRGK) provides a ligand contact to substrate. Asp74 (proton acceptor) is an active-site residue. A Mg(2+)-binding site is contributed by Asp74. Substrate-binding positions include Ser75, 156 to 159 (FGYD), Lys179, and 184 to 185 (HR).

The protein belongs to the HAM1 NTPase family. Homodimer. The cofactor is Mg(2+).

The catalysed reaction is XTP + H2O = XMP + diphosphate + H(+). It carries out the reaction dITP + H2O = dIMP + diphosphate + H(+). The enzyme catalyses ITP + H2O = IMP + diphosphate + H(+). Functionally, pyrophosphatase that catalyzes the hydrolysis of nucleoside triphosphates to their monophosphate derivatives, with a high preference for the non-canonical purine nucleotides XTP (xanthosine triphosphate), dITP (deoxyinosine triphosphate) and ITP. Seems to function as a house-cleaning enzyme that removes non-canonical purine nucleotides from the nucleotide pool, thus preventing their incorporation into DNA/RNA and avoiding chromosomal lesions. The chain is dITP/XTP pyrophosphatase from Sulfurimonas denitrificans (strain ATCC 33889 / DSM 1251) (Thiomicrospira denitrificans (strain ATCC 33889 / DSM 1251)).